The following is a 420-amino-acid chain: Gamma-glutamyl phosphate reductase (420 aa).

This sequence belongs to the gamma-glutamyl phosphate reductase family.

It localises to the cytoplasm. It catalyses the reaction L-glutamate 5-semialdehyde + phosphate + NADP(+) = L-glutamyl 5-phosphate + NADPH + H(+). It participates in amino-acid biosynthesis; L-proline biosynthesis; L-glutamate 5-semialdehyde from L-glutamate: step 2/2. In terms of biological role, catalyzes the NADPH-dependent reduction of L-glutamate 5-phosphate into L-glutamate 5-semialdehyde and phosphate. The product spontaneously undergoes cyclization to form 1-pyrroline-5-carboxylate. This chain is Gamma-glutamyl phosphate reductase, found in Streptococcus pneumoniae (strain CGSP14).